Here is a 520-residue protein sequence, read N- to C-terminus: 3-phosphoshikimate 1-carboxyvinyltransferase, chloroplastic (520 aa).

Residues 1-76 (MAQISSMAQG…RISASVATAE (76 aa)) constitute a chloroplast transit peptide. Lysine 99, serine 100, and arginine 104 together coordinate 3-phosphoshikimate. Lysine 99 serves as a coordination point for phosphoenolpyruvate. Phosphoenolpyruvate contacts are provided by glycine 177 and arginine 207. Positions 254, 255, 256, 282, 407, and 434 each coordinate 3-phosphoshikimate. A phosphoenolpyruvate-binding site is contributed by glutamine 256. Aspartate 407 (proton acceptor) is an active-site residue. Arginine 438, arginine 480, and lysine 505 together coordinate phosphoenolpyruvate.

It belongs to the EPSP synthase family.

It is found in the plastid. The protein localises to the chloroplast. It carries out the reaction 3-phosphoshikimate + phosphoenolpyruvate = 5-O-(1-carboxyvinyl)-3-phosphoshikimate + phosphate. The protein operates within metabolic intermediate biosynthesis; chorismate biosynthesis; chorismate from D-erythrose 4-phosphate and phosphoenolpyruvate: step 6/7. Its function is as follows. Catalyzes the transfer of the enolpyruvyl moiety of phosphoenolpyruvate (PEP) to the 5-hydroxyl of shikimate-3-phosphate (S3P) to produce enolpyruvyl shikimate-3-phosphate and inorganic phosphate. The sequence is that of 3-phosphoshikimate 1-carboxyvinyltransferase, chloroplastic from Solanum lycopersicum (Tomato).